The chain runs to 324 residues: HTH-type transcriptional regulator CysB (324 aa).

The HTH lysR-type domain maps to 1–59 (MKLQQLRYIVEVVNHNLNVSSTAEGLYTSQPGISKQVRMLEDELGIQIFARSGKHLTQV). Positions 19 to 38 (VSSTAEGLYTSQPGISKQVR) form a DNA-binding region, H-T-H motif.

It belongs to the LysR transcriptional regulatory family. As to quaternary structure, homotetramer.

The protein resides in the cytoplasm. Its function is as follows. This protein is a positive regulator of gene expression for the cysteine regulon. The inducer for CysB is N-acetylserine. Thiosulfate and sulfide act as anti-inducers. This is HTH-type transcriptional regulator CysB (cysB) from Klebsiella pneumoniae.